The following is a 306-amino-acid chain: Galactosylgalactosylxylosylprotein 3-beta-glucuronosyltransferase I (306 aa).

The Cytoplasmic portion of the chain corresponds to 1-11 (MSEVRIRPRQV). A helical; Signal-anchor for type II membrane protein membrane pass occupies residues 12-29 (LILIIVFLVVLMMVHRNG). Over 30–306 (KRTCQGPEYL…GQRSDGGMEV (277 aa)) the chain is Lumenal. A glycan (N-linked (GlcNAc...) asparagine) is linked at asparagine 90. Aspartate 163 is a Mn(2+) binding site. The active-site Proton acceptor is glutamate 252.

It belongs to the glycosyltransferase 43 family. It depends on Mn(2+) as a cofactor.

The protein localises to the golgi apparatus membrane. It carries out the reaction 3-O-(beta-D-galactosyl-(1-&gt;3)-beta-D-galactosyl-(1-&gt;4)-beta-D-xylosyl)-L-seryl-[protein] + UDP-alpha-D-glucuronate = 3-O-(beta-D-GlcA-(1-&gt;3)-beta-D-Gal-(1-&gt;3)-beta-D-Gal-(1-&gt;4)-beta-D-Xyl)-L-seryl-[protein] + UDP + H(+). It functions in the pathway protein modification; protein glycosylation. Functionally, involved in the biosynthesis of L2/HNK-1 carbohydrate epitope on both glycolipids and glycoproteins. Shows strict specificity for Gal-beta-1,3-Gal-beta-1,4-Xyl, exhibiting negligible incorporation into other galactoside substrates. The polypeptide is Galactosylgalactosylxylosylprotein 3-beta-glucuronosyltransferase I (GlcAT-I) (Drosophila melanogaster (Fruit fly)).